Here is a 420-residue protein sequence, read N- to C-terminus: Odorant receptor 63a (420 aa).

The Cytoplasmic portion of the chain corresponds to 1 to 43; it reads MYSPEEAAELKRRNYRSIREMIRLSYTVGFNLLDPSRCGQVLR. Residues 44–64 traverse the membrane as a helical segment; sequence IWTIVLSVSSLASLYGHWQML. Residues 65–76 are Extracellular-facing; that stretch reads ARYIHDIPRIGE. The chain crosses the membrane as a helical span at residues 77–97; the sequence is TAGTALQFLTSIAKMWYFLFA. Residues 98 to 150 are Cytoplasmic-facing; it reads HRQIYELLRKARCHELLQKCELFERMSDLPVIKEIRQQVESTMNRYWASTRRQ. The chain crosses the membrane as a helical span at residues 151-171; sequence ILIYLYSCICITTNYFINSFV. Residues 172–217 lie on the Extracellular side of the membrane; sequence INLYRYFTKPKGSYDIMLPLPSLYPAWEHKGLEFPYYHIQMYLETC. A helical membrane pass occupies residues 218–238; it reads SLYICGMCAVSFDGVFIVLCL. The Cytoplasmic segment spans residues 239-296; that stretch reads HSVGLMRSLNQMVEQATSELVPPDRRVEYLRCCIYQYQRVANFATEVNNCFRHITFTQ. Residues 297-317 form a helical membrane-spanning segment; it reads FLLSLFNWGLALFQMSVGLGN. An N-linked (GlcNAc...) asparagine glycan is attached at Asn318. At 318-320 the chain is on the extracellular side; sequence NSS. Residues 321-341 traverse the membrane as a helical segment; that stretch reads ITMIRMTMYLVAAGYQIVVYC. The Cytoplasmic segment spans residues 342-387; sequence YNGQRFATASEEIANAFYQVRWYGESREFRHLIRMMLMRTNRGFRL. The chain crosses the membrane as a helical span at residues 388-408; sequence DVSWFMQMSLPTLMAMVRTSG. Residues 409–420 are Extracellular-facing; sequence QYFLLLQNVNQK.

The protein belongs to the insect chemoreceptor superfamily. Heteromeric odorant receptor channel (TC 1.A.69) family. Or63a subfamily. In terms of assembly, interacts with Orco. Complexes exist early in the endomembrane system in olfactory sensory neurons (OSNs), coupling these complexes to the conserved ciliary trafficking pathway.

Its subcellular location is the cell membrane. In terms of biological role, odorant receptor which mediates acceptance or avoidance behavior, depending on its substrates. The odorant receptor repertoire encodes a large collection of odor stimuli that vary widely in identity, intensity, and duration. May form a complex with Orco to form odorant-sensing units, providing sensitive and prolonged odorant signaling and calcium permeability. Involved in the behavioral responses to butyl acetate, isoamyl acetate, and hexanoic acid. The protein is Odorant receptor 63a (Or63a) of Drosophila melanogaster (Fruit fly).